Here is an 824-residue protein sequence, read N- to C-terminus: Mucosa-associated lymphoid tissue lymphoma translocation protein 1 (824 aa).

Positions 1–27 are disordered; sequence MSLLGDPLQALPPSAAPTGPLLAPPAG. Position 2 is an N-acetylserine (serine 2). The segment covering 11–27 has biased composition (low complexity); the sequence is LPPSAAPTGPLLAPPAG. Positions 39 to 126 constitute a Death domain; the sequence is RRLSELLDQA…EVLQLLSPPG (88 aa). Ig-like C2-type domains are found at residues 125-201 and 212-305; these read PGIK…FEFS and PESF…KKVE. A Phosphoserine modification is found at serine 135. 2 disulfide bridges follow: cysteine 147–cysteine 190 and cysteine 248–cysteine 290. The interval 348-562 is caspase-like; that stretch reads IGNMNYREHP…SLSEKRALTD (215 aa). The short motif at 369–376 is the Nuclear export signal element; sequence LTNLLRQL. Residues histidine 415 and cysteine 464 contribute to the active site.

Belongs to the peptidase C14B family. In terms of assembly, homooligomer; forms oligomers which bind to TRAF6. Forms a complex with CARD14 and MALT1; resulting in the formation of a CBM (CARD14-BCL10-MALT1) complex. Forms a complex with CARD11 and MALT1; resulting in the formation of a CBM (CARD11-BCL10-MALT1) complex. Forms a complex with CARD9 and MALT1; resulting in the formation of a CBM (CARD9-BCL10-MALT1) complex. In terms of tissue distribution, highly expressed in peripheral blood mononuclear cells. Detected at lower levels in bone marrow, thymus and lymph node, and at very low levels in colon and lung.

It localises to the cytoplasm. It is found in the perinuclear region. The protein localises to the nucleus. In terms of biological role, protease that enhances BCL10-induced activation: acts via formation of CBM complexes that channel adaptive and innate immune signaling downstream of CARD domain-containing proteins (CARD9, CARD11 and CARD14) to activate NF-kappa-B and MAP kinase p38 pathways which stimulate expression of genes encoding pro-inflammatory cytokines and chemokines. Mediates BCL10 cleavage: MALT1-dependent BCL10 cleavage plays an important role in T-cell antigen receptor-induced integrin adhesion. Involved in the induction of T helper 17 cells (Th17) differentiation. Cleaves RC3H1 and ZC3H12A in response to T-cell receptor (TCR) stimulation which releases their cooperatively repressed targets to promote Th17 cell differentiation. Also mediates cleavage of N4BP1 in T-cells following TCR-mediated activation, leading to N4BP1 inactivation. May also have ubiquitin ligase activity: binds to TRAF6, inducing TRAF6 oligomerization and activation of its ligase activity. The polypeptide is Mucosa-associated lymphoid tissue lymphoma translocation protein 1 (Homo sapiens (Human)).